A 255-amino-acid chain; its full sequence is 5'-nucleotidase SurE (255 aa).

Asp8, Asp9, Ser40, and Asn93 together coordinate a divalent metal cation.

Belongs to the SurE nucleotidase family. Requires a divalent metal cation as cofactor.

The protein resides in the cytoplasm. It catalyses the reaction a ribonucleoside 5'-phosphate + H2O = a ribonucleoside + phosphate. Nucleotidase that shows phosphatase activity on nucleoside 5'-monophosphates. The protein is 5'-nucleotidase SurE of Bradyrhizobium sp. (strain ORS 278).